The sequence spans 260 residues: DNA repair protein RecO (260 aa).

This sequence belongs to the RecO family.

In terms of biological role, involved in DNA repair and RecF pathway recombination. In Salinibacter ruber (strain DSM 13855 / M31), this protein is DNA repair protein RecO.